A 65-amino-acid chain; its full sequence is Pancreatic polypeptide prohormone (65 aa).

Tyrosine 36 is modified (tyrosine amide). Residues 59 to 65 constitute a propeptide that is removed on maturation; the sequence is ELSPMGA.

Belongs to the NPY family.

It is found in the secreted. Its function is as follows. Hormone secreted by pancreatic cells that acts as a regulator of pancreatic and gastrointestinal functions probably by signaling through the G protein-coupled receptor NPY4R2. This is Pancreatic polypeptide prohormone (PPY) from Sus scrofa (Pig).